The sequence spans 248 residues: Pyridoxine 5'-phosphate synthase (248 aa).

N7 provides a ligand contact to 3-amino-2-oxopropyl phosphate. 9-10 (DH) contributes to the 1-deoxy-D-xylulose 5-phosphate binding site. R18 contacts 3-amino-2-oxopropyl phosphate. Catalysis depends on H43, which acts as the Proton acceptor. Positions 45 and 50 each coordinate 1-deoxy-D-xylulose 5-phosphate. The active-site Proton acceptor is E70. T100 provides a ligand contact to 1-deoxy-D-xylulose 5-phosphate. H191 serves as the catalytic Proton donor. 3-amino-2-oxopropyl phosphate contacts are provided by residues G192 and 213–214 (GH).

This sequence belongs to the PNP synthase family. In terms of assembly, homooctamer; tetramer of dimers.

It is found in the cytoplasm. It catalyses the reaction 3-amino-2-oxopropyl phosphate + 1-deoxy-D-xylulose 5-phosphate = pyridoxine 5'-phosphate + phosphate + 2 H2O + H(+). It participates in cofactor biosynthesis; pyridoxine 5'-phosphate biosynthesis; pyridoxine 5'-phosphate from D-erythrose 4-phosphate: step 5/5. Its function is as follows. Catalyzes the complicated ring closure reaction between the two acyclic compounds 1-deoxy-D-xylulose-5-phosphate (DXP) and 3-amino-2-oxopropyl phosphate (1-amino-acetone-3-phosphate or AAP) to form pyridoxine 5'-phosphate (PNP) and inorganic phosphate. This Bordetella bronchiseptica (strain ATCC BAA-588 / NCTC 13252 / RB50) (Alcaligenes bronchisepticus) protein is Pyridoxine 5'-phosphate synthase.